Reading from the N-terminus, the 881-residue chain is DNA mismatch repair protein MutS (881 aa).

ATP is bound at residue 605–612; sequence GPNMSGKS.

The protein belongs to the DNA mismatch repair MutS family.

In terms of biological role, this protein is involved in the repair of mismatches in DNA. It is possible that it carries out the mismatch recognition step. This protein has a weak ATPase activity. This is DNA mismatch repair protein MutS from Limosilactobacillus reuteri subsp. reuteri (strain JCM 1112) (Lactobacillus reuteri).